The chain runs to 828 residues: Vacuolar transporter chaperone complex subunit 2 (828 aa).

The SPX domain occupies 1-146; it reads MLFGVKLANE…PKYPSVKSLL (146 aa). Residues 1–693 are Cytoplasmic-facing; the sequence is MLFGVKLANE…EAKVWLANER (693 aa). Positions 127–134 are important for inositol polyphosphate binding; the sequence is KIVKKHDK. Serine 182, serine 187, serine 196, serine 264, serine 583, serine 615, and serine 616 each carry phosphoserine. The tract at residues 580–636 is disordered; the sequence is RRLSNLKEPQHQAAVPVSQEENERITSQGDLEADGSSDEETEQEPHSKRSKKVRRRK. The span at 610–621 shows a compositional bias: acidic residues; the sequence is LEADGSSDEETE. A Phosphothreonine modification is found at threonine 620. Serine 626 is modified (phosphoserine). The span at 627-636 shows a compositional bias: basic residues; sequence KRSKKVRRRK. Phosphoserine is present on serine 657. The chain crosses the membrane as a helical span at residues 694–716; it reads TFNRWLSVTSLLSVLTFSIYNSV. Topologically, residues 717-727 are vacuolar; the sequence is KKAEYPTLANY. Residues 728–748 form a helical membrane-spanning segment; it reads MAYVYFGLTIFCALWSYSIYM. The Cytoplasmic portion of the chain corresponds to 749-766; it reads KRVDIIQQRSGQHLDAPL. A helical transmembrane segment spans residues 767–787; that stretch reads GPVLVSIVLFVTLVVNFVMAF. Residues 788 to 828 lie on the Vacuolar side of the membrane; sequence RNAAKSRQELQIQNLEVPERIPEVLRPLQNYLFKLMGPSSD.

Belongs to the VTC2/3 family. As to quaternary structure, the VTC core complex is an integral membrane heterooligomer composed of the catalytic subunit VTC4 and the accessory subunits VTC1, VTC2 and VTC3. The complex exists in 2 different sub-complexes: VTC1-VTC2-VCT4 and VCT1-VTC3-VTC4. The VCT1-VTC3-VTC4 subcomplex is mostly found on the vacuolar membrane. The VTC1-VTC2-VCT4 subcomplex is observed in the cell periphery, probably ER and nuclear envelope, but localizes to the vacuole under phosphate starvation. Each subunit contains 3 transmembrane helices. VTC1 is a small membrane protein without hydrophilic domain. VTC2, VTC3 and VTC4 are related and have 2 hydrophilic domains that face the cytosol, an N-terminal SPX domain and the central core domain. The central core in VTC4 is the catalytic domain, with the essential catalytic lysine replaced by isoleucine and leucine in VTC2 and VTC3, respectively. The core complex associates with the accessory subunit VTC5. The complex interacts with the v-SNARE NYV1 and with the V(0) subunit of V-ATPase VPH1.

Its subcellular location is the vacuole membrane. The protein localises to the cytoplasm. It is found in the cell cortex. The protein resides in the endoplasmic reticulum membrane. It localises to the cytoplasmic vesicle. Its subcellular location is the autophagosome membrane. Its function is as follows. Accessory subunit of the vacuolar transporter chaperone (VTC) complex. The VTC complex acts as a vacuolar polyphosphate polymerase that catalyzes the synthesis of inorganic polyphosphate (polyP) via transfer of phosphate from ATP to a growing polyP chain, releasing ADP. VTC exposes its catalytic domain VTC4 to the cytosol, where the growing polyP chain winds through a tunnel-shaped pocket, integrating cytoplasmic polymer synthesis with polyP membrane translocation. The VTC complex carries 9 vacuolar transmembrane domains, which are likely to constitute the translocation channel into the organelle lumen. PolyP synthesis is tightly coupled to its transport into the vacuole lumen, in order to avoid otherwise toxic intermediates in the cytosol, and it depends on the proton gradient across the membrane, formed by V-ATPase. Binds inositol hexakisphosphate (Ins6P) and similar inositol polyphosphates, such as 5-diphospho-inositol pentakisphosphate (5-InsP7); these are important intracellular signaling molecules. Inositol polyphosphate binding promotes vacuolar polyphosphate synthesis. The VTC complex also plays a role in vacuolar membrane fusion. Required for SEC18/NSF activity in SNARE priming, membrane binding of LMA1 and V(0) trans-complex formation. This is Vacuolar transporter chaperone complex subunit 2 from Saccharomyces cerevisiae (strain ATCC 204508 / S288c) (Baker's yeast).